We begin with the raw amino-acid sequence, 299 residues long: Virginiamycin B lyase (299 aa).

Residue His228 coordinates substrate. Glu268 contributes to the Mg(2+) binding site. His270 (proton acceptor) is an active-site residue. A Mg(2+)-binding site is contributed by Glu284.

The protein belongs to the Vgb family. As to quaternary structure, monomer. Mg(2+) is required as a cofactor.

Its function is as follows. Inactivates the type B streptogramin antibiotics by linearizing the lactone ring at the ester linkage, generating a free phenylglycine carboxylate and converting the threonyl moiety into 2-amino-butenoic acid. This Staphylococcus aureus protein is Virginiamycin B lyase (vgb).